The chain runs to 61 residues: Small ribosomal subunit protein uS14B (61 aa).

Zn(2+)-binding residues include cysteine 24, cysteine 27, cysteine 40, and cysteine 43.

It belongs to the universal ribosomal protein uS14 family. Zinc-binding uS14 subfamily. Part of the 30S ribosomal subunit. Contacts proteins S3 and S10. It depends on Zn(2+) as a cofactor.

Binds 16S rRNA, required for the assembly of 30S particles and may also be responsible for determining the conformation of the 16S rRNA at the A site. In Mycolicibacterium gilvum (strain PYR-GCK) (Mycobacterium gilvum (strain PYR-GCK)), this protein is Small ribosomal subunit protein uS14B.